Consider the following 490-residue polypeptide: Alpha-galactosidase (490 aa).

4 to 70 serves as a coordination point for NAD(+); sequence FKIAIIGAGS…LPTRVTATTD (67 aa). Asn150 contacts substrate. Cys171 contacts Mn(2+). Residue His172 is the Proton donor of the active site. His201 lines the Mn(2+) pocket. Tyr258 functions as the Proton acceptor in the catalytic mechanism.

It belongs to the glycosyl hydrolase 4 family. In terms of assembly, homodimer. Mn(2+) is required as a cofactor. The cofactor is NAD(+).

The enzyme catalyses Hydrolysis of terminal, non-reducing alpha-D-galactose residues in alpha-D-galactosides, including galactose oligosaccharides, galactomannans and galactolipids.. The sequence is that of Alpha-galactosidase (melA) from Rhizobium meliloti (strain 1021) (Ensifer meliloti).